The chain runs to 430 residues: UDP-N-acetylglucosamine 1-carboxyvinyltransferase (430 aa).

Position 22-23 (22-23 (KN)) interacts with phosphoenolpyruvate. A UDP-N-acetyl-alpha-D-glucosamine-binding site is contributed by Arg-102. Residue Cys-126 is the Proton donor of the active site. Position 126 is a 2-(S-cysteinyl)pyruvic acid O-phosphothioketal (Cys-126). Residues 131–135 (RPVDL), 172–175 (KVSV), Asp-317, and Ile-339 contribute to the UDP-N-acetyl-alpha-D-glucosamine site.

It belongs to the EPSP synthase family. MurA subfamily.

Its subcellular location is the cytoplasm. The catalysed reaction is phosphoenolpyruvate + UDP-N-acetyl-alpha-D-glucosamine = UDP-N-acetyl-3-O-(1-carboxyvinyl)-alpha-D-glucosamine + phosphate. It functions in the pathway cell wall biogenesis; peptidoglycan biosynthesis. Cell wall formation. Adds enolpyruvyl to UDP-N-acetylglucosamine. The protein is UDP-N-acetylglucosamine 1-carboxyvinyltransferase of Sinorhizobium fredii (strain NBRC 101917 / NGR234).